Consider the following 237-residue polypeptide: Leucyl/phenylalanyl-tRNA--protein transferase (237 aa).

The protein belongs to the L/F-transferase family.

Its subcellular location is the cytoplasm. It carries out the reaction N-terminal L-lysyl-[protein] + L-leucyl-tRNA(Leu) = N-terminal L-leucyl-L-lysyl-[protein] + tRNA(Leu) + H(+). It catalyses the reaction N-terminal L-arginyl-[protein] + L-leucyl-tRNA(Leu) = N-terminal L-leucyl-L-arginyl-[protein] + tRNA(Leu) + H(+). The enzyme catalyses L-phenylalanyl-tRNA(Phe) + an N-terminal L-alpha-aminoacyl-[protein] = an N-terminal L-phenylalanyl-L-alpha-aminoacyl-[protein] + tRNA(Phe). Functions in the N-end rule pathway of protein degradation where it conjugates Leu, Phe and, less efficiently, Met from aminoacyl-tRNAs to the N-termini of proteins containing an N-terminal arginine or lysine. The sequence is that of Leucyl/phenylalanyl-tRNA--protein transferase from Shewanella baltica (strain OS223).